The following is a 348-amino-acid chain: Zinc finger and SCAN domain-containing protein 16 (348 aa).

Positions 41-123 (RQHFRKLCYQ…TVLEDLEREL (83 aa)) constitute an SCAN box domain. Disordered stretches follow at residues 160-184 (PKKTQLEQEAGKPQRNGDKTRTKNE) and 205-226 (RLNKDTPQHPKSKDIIENEGRS). Residues 163-184 (TQLEQEAGKPQRNGDKTRTKNE) are compositionally biased toward basic and acidic residues. 4 C2H2-type zinc fingers span residues 236–258 (YKCDECGKSFSHSSDLSKHRRTH), 264–286 (YKCDECGKAFIQRSHLIGHHRVH), 292–314 (YKCKECGKDFSGRTGLIQHQRIH), and 320–342 (YECDECGRPFRVSSALIRHQRIH).

It belongs to the krueppel C2H2-type zinc-finger protein family.

Its subcellular location is the nucleus. In terms of biological role, may be involved in transcriptional regulation. The chain is Zinc finger and SCAN domain-containing protein 16 (ZSCAN16) from Homo sapiens (Human).